A 522-amino-acid polypeptide reads, in one-letter code: FAD-dependent monooxygenase fsr3 (522 aa).

The interval methionine 1–glutamate 27 is disordered. Residue arginine 164 participates in FAD binding. Arginine 245 is an active-site residue. Residues aspartate 369 and alanine 382 each coordinate FAD.

Belongs to the paxM FAD-dependent monooxygenase family. FAD serves as cofactor.

Its pathway is polyketide biosynthesis. In terms of biological role, FAD-dependent monooxygenase; part of the gene cluster that mediates the biosynthesis of fusarubins, highly pigmented naphthoquinones responsible for the coloration of the fruiting bodies. The non-reducing polyketide synthase FSR1 is responsible for the condensation of seven acetyl-CoA units to yield a haptaketide. After rings A and B are formed by aldol-type cyclization, the PKS-derived product is released as 6-O-demethylfusarubinaldehyde. Then, two hydroxyl groups at C-5 and C-10 are incorporated by FSR3, and simultaneously hydroxyl groups at C-6 and C-8 are methylated by FSR2. The aldehyde is, on the one hand, reduced by FSR3 to 8-O-methylfusarubin alcohol, which equilibrates mainly with 8-O-methylfusarubin and only small amounts of 8-O-methylnectriafurone. On the other hand, the aldehyde can be oxidized to form 8-O-methylfusarubinic acid, a reaction driven by FSR3 equilibrating with 8-O-methylfusarubinlactone, finally resulting in 8-O-methylanhydrofusarubinlactol after a further reduction step and loss of water. 8-O-Methylfusarubinic acid can also undergo decarboxylation, resulting in 8-O-methyl-13-hydroxynorjavanicin after another hydroxylation step at C-13. Both steps are most likely also accomplished by FSR3. No enzymatic function has been determined so far for either FSR4 and FSR5. Their deletion does not alter the product spectrum, but the possibility that they catalyze specific enzymatic steps during perithecium development cannot be ruled out. FSR4 might possess a regulatory function in the biosynthesis of fusarubins. The sequence is that of FAD-dependent monooxygenase fsr3 from Gibberella fujikuroi (strain CBS 195.34 / IMI 58289 / NRRL A-6831) (Bakanae and foot rot disease fungus).